A 397-amino-acid polypeptide reads, in one-letter code: GDNF family receptor alpha-3 (397 aa).

Positions 1-28 (MGLSWSPRPPLLMILLLVLSLWLPLGAG) are cleaved as a signal peptide. Cys-48 and Cys-54 are joined by a disulfide. N-linked (GlcNAc...) asparagine glycosylation is found at Asn-92 and Asn-145. 10 disulfide bridges follow: Cys-159/Cys-215, Cys-166/Cys-172, Cys-183/Cys-193, Cys-188/Cys-236, Cys-217/Cys-224, Cys-245/Cys-313, Cys-252/Cys-258, Cys-269/Cys-285, Cys-278/Cys-337, and Cys-315/Cys-325. Residue Asn-306 is glycosylated (N-linked (GlcNAc...) asparagine). A lipid anchor (GPI-anchor amidated asparagine) is attached at Asn-371. The propeptide at 372 to 397 (PALRLQPRLPILSFSILPLILLQTLW) is removed in mature form.

The protein belongs to the GDNFR family. In terms of assembly, interacts with ARTN ligand and RET: forms a 2:2:2 ternary complex composed of ARTN ligand, GFRA3 and RET receptor. Interacts with SORL1.

The protein resides in the cell membrane. Functionally, receptor for artemin (ARTN), a growth factor that supports the survival of sensory and sympathetic peripheral neurons. ARTN-binding leads to autophosphorylation and activation of the RET receptor. This is GDNF family receptor alpha-3 (Gfra3) from Mus musculus (Mouse).